A 114-amino-acid chain; its full sequence is MSRALICSLALLAMLVISGTYASPAANAEALAAANAEASAAANAEPLAAANAEPLAAANAEPLAAANADPIAAANAEPSAAANAEPLAAANAEPSAGPSPLAAAQDPPVVKMKG.

An N-terminal signal peptide occupies residues 1-22 (MSRALICSLALLAMLVISGTYA). 9 repeat units span residues 22 to 29 (ASPAANAE), 30 to 37 (ALAAANAE), 38 to 45 (ASAAANAE), 46 to 53 (PLAAANAE), 54 to 61 (PLAAANAE), 62 to 69 (PLAAANAD), 70 to 77 (PIAAANAE), 78 to 85 (PSAAANAE), and 86 to 93 (PLAAANAE). Residues 22–93 (ASPAANAEAL…AEPLAAANAE (72 aa)) are 9 X 8 AA approximate tandem repeats of [AP]-[ILS]-[AP]-A-A-N-A-[DE]. Residues 23–104 (SPAANAEALA…SAGPSPLAAA (82 aa)) constitute a propeptide that is removed on maturation. A compositionally biased stretch (low complexity) spans 82 to 96 (ANAEPLAAANAEPSA). The interval 82-114 (ANAEPLAAANAEPSAGPSPLAAAQDPPVVKMKG) is disordered. Position 105 is a pyrrolidone carboxylic acid (glutamine 105). Lysine 113 carries the lysine amide modification.

As to expression, expressed by the venom gland.

The protein resides in the secreted. This is As-peptide 126 from Anoplius samariensis (Solitary wasp).